A 446-amino-acid chain; its full sequence is Golgi reassembly-stacking protein 1 (446 aa).

Positions methionine 1–glycine 20 are disordered. A lipid anchor (N-myristoyl glycine) is attached at glycine 2. PDZ GRASP-type domains follow at residues glutamate 14–phenylalanine 104 and histidine 110–leucine 198. Residues glutamate 14 to glycine 214 are GRASP. 3 residues coordinate Zn(2+): histidine 17, histidine 19, and cysteine 102. The segment at leucine 189–isoleucine 201 is essential for interaction with GOLGA2/GM130. Disordered stretches follow at residues proline 202–arginine 252 and valine 343–leucine 446. Threonine 216, threonine 220, and threonine 224 each carry phosphothreonine. A compositionally biased stretch (low complexity) spans valine 343–serine 354. Residues serine 365, serine 367, and serine 376 each carry the phosphoserine modification.

This sequence belongs to the GORASP family. In terms of assembly, homodimer. Forms higher-order oligomers under interphase but not mitotic conditions. Dimers of the protein on one membrane might be able to interact with dimers on another and so stack cisternae. Interacts with the C-terminus of GOLGA2/GM130 under both mitotic and non-mitotic conditions. The interaction is critical for the correct targeting of both proteins to the cis-Golgi. Interacts with TMED2 and TMED3. Phosphorylated by CDC2/B1 and PLK kinases during mitosis. Phosphorylation cycle correlates with the cisternal stacking cycle. Phosphorylation of the homodimer prevents the association of dimers into higher-order oligomers, leading to cisternal unstacking. In terms of processing, target for caspase-3 cleavage during apoptosis. The cleavage contributes to Golgi fragmentation and occurs very early in the execution phase of apoptosis. Post-translationally, myristoylated.

It localises to the golgi apparatus. It is found in the cis-Golgi network membrane. Its function is as follows. Key structural protein of the Golgi apparatus. The membrane cisternae of the Golgi apparatus adhere to each other to form stacks, which are aligned side by side to form the Golgi ribbon. Acting in concert with GORASP2/GRASP55, is required for the formation and maintenance of the Golgi ribbon, and may be dispensable for the formation of stacks. However, other studies suggest that GORASP1 plays an important role in assembly and membrane stacking of the cisternae, and in the reassembly of Golgi stacks after breakdown during mitosis. Caspase-mediated cleavage of GORASP1 is required for fragmentation of the Golgi during apoptosis. Also mediates, via its interaction with GOLGA2/GM130, the docking of transport vesicles with the Golgi membranes. Mediates ER stress-induced unconventional (ER/Golgi-independent) trafficking of core-glycosylated CFTR to cell membrane. The polypeptide is Golgi reassembly-stacking protein 1 (Gorasp1) (Mus musculus (Mouse)).